We begin with the raw amino-acid sequence, 23 residues long: Basic phospholipase A2 mangshantoxin (23 aa).

It belongs to the phospholipase A2 family. Group II subfamily. Requires Ca(2+) as cofactor. Post-translationally, contains 7 disulfide bonds. Expressed by the venom gland.

It localises to the secreted. The catalysed reaction is a 1,2-diacyl-sn-glycero-3-phosphocholine + H2O = a 1-acyl-sn-glycero-3-phosphocholine + a fatty acid + H(+). Its function is as follows. Snake venom phospholipase A2 (PLA2) that displays presynaptic neurotoxicity. PLA2 catalyzes the calcium-dependent hydrolysis of the 2-acyl groups in 3-sn-phosphoglycerides. The chain is Basic phospholipase A2 mangshantoxin from Protobothrops mangshanensis (Mangshan pitviper).